A 132-amino-acid chain; its full sequence is Interleukin-13 (132 aa).

The N-terminal stretch at M1–T18 is a signal peptide. N-linked (GlcNAc...) asparagine glycosylation is found at N38, N49, N57, and N75. 2 disulfides stabilise this stretch: C48–C76 and C64–C90.

Belongs to the IL-4/IL-13 family. Interacts with IL13RA2.

The protein resides in the secreted. Its function is as follows. Cytokine that plays important roles in allergic inflammation and immune response to parasite infection. Synergizes with IL2 in regulating interferon-gamma synthesis. Stimulates B-cell proliferation, and activation of eosinophils, basophils, and mast cells. Plays an important role in controlling IL33 activity by modulating the production of transmembrane and soluble forms of interleukin-1 receptor-like 1/IL1RL1. Displays the capacity to antagonize Th1-driven proinflammatory immune response and downregulates synthesis of many proinflammatory cytokines including IL1, IL6, IL10, IL12 and TNF-alpha through a mechanism that partially involves suppression of NF-kappa-B. Also functions on nonhematopoietic cells, including endothelial cells where it induces vascular cell adhesion protein 1/VCAM1, which is important in the recruitment of eosinophils. Exerts its biological effects through its receptors which comprises the IL4R chain and the IL13RA1 chain, to activate JAK1 and TYK2, leading to the activation of STAT6. Aside from IL13RA1, another receptor IL13RA2 acts as a high affinity decoy for IL13 and mediates internalization and depletion of extracellular IL13. The protein is Interleukin-13 (IL13) of Bos taurus (Bovine).